Here is a 156-residue protein sequence, read N- to C-terminus: ATP synthase subunit b (156 aa).

A helical transmembrane segment spans residues 7-29; the sequence is LIGQSLTFIAFILFCMKYVWPQL.

This sequence belongs to the ATPase B chain family. In terms of assembly, F-type ATPases have 2 components, F(1) - the catalytic core - and F(0) - the membrane proton channel. F(1) has five subunits: alpha(3), beta(3), gamma(1), delta(1), epsilon(1). F(0) has three main subunits: a(1), b(2) and c(10-14). The alpha and beta chains form an alternating ring which encloses part of the gamma chain. F(1) is attached to F(0) by a central stalk formed by the gamma and epsilon chains, while a peripheral stalk is formed by the delta and b chains.

Its subcellular location is the cell inner membrane. Its function is as follows. F(1)F(0) ATP synthase produces ATP from ADP in the presence of a proton or sodium gradient. F-type ATPases consist of two structural domains, F(1) containing the extramembraneous catalytic core and F(0) containing the membrane proton channel, linked together by a central stalk and a peripheral stalk. During catalysis, ATP synthesis in the catalytic domain of F(1) is coupled via a rotary mechanism of the central stalk subunits to proton translocation. Component of the F(0) channel, it forms part of the peripheral stalk, linking F(1) to F(0). This chain is ATP synthase subunit b, found in Saccharophagus degradans (strain 2-40 / ATCC 43961 / DSM 17024).